Reading from the N-terminus, the 486-residue chain is Glutamyl-tRNA(Gln) amidotransferase subunit A (486 aa).

Catalysis depends on charge relay system residues lysine 76 and serine 151. Serine 175 (acyl-ester intermediate) is an active-site residue.

It belongs to the amidase family. GatA subfamily. In terms of assembly, heterotrimer of A, B and C subunits.

The enzyme catalyses L-glutamyl-tRNA(Gln) + L-glutamine + ATP + H2O = L-glutaminyl-tRNA(Gln) + L-glutamate + ADP + phosphate + H(+). Functionally, allows the formation of correctly charged Gln-tRNA(Gln) through the transamidation of misacylated Glu-tRNA(Gln) in organisms which lack glutaminyl-tRNA synthetase. The reaction takes place in the presence of glutamine and ATP through an activated gamma-phospho-Glu-tRNA(Gln). The polypeptide is Glutamyl-tRNA(Gln) amidotransferase subunit A (Marinomonas sp. (strain MWYL1)).